Reading from the N-terminus, the 355-residue chain is Acidic fibroblast growth factor intracellular-binding protein B (355 aa).

Interacts with IER2.

The protein localises to the nucleus. It is found in the endomembrane system. Mediates with IER2 FGF-signaling in Kupffer's vesicle ciliogenesis and in the establishment of laterality in the embryo. May be involved in mitogenic function of FGF1. This is Acidic fibroblast growth factor intracellular-binding protein B from Danio rerio (Zebrafish).